Consider the following 755-residue polypeptide: Xaa-Pro dipeptidyl-peptidase (755 aa).

Catalysis depends on charge relay system residues Ser348, Asp468, and His498.

This sequence belongs to the peptidase S15 family. In terms of assembly, homodimer.

Its subcellular location is the cytoplasm. It carries out the reaction Hydrolyzes Xaa-Pro-|- bonds to release unblocked, N-terminal dipeptides from substrates including Ala-Pro-|-p-nitroanilide and (sequentially) Tyr-Pro-|-Phe-Pro-|-Gly-Pro-|-Ile.. Removes N-terminal dipeptides sequentially from polypeptides having unsubstituted N-termini provided that the penultimate residue is proline. This is Xaa-Pro dipeptidyl-peptidase from Streptococcus thermophilus.